We begin with the raw amino-acid sequence, 3133 residues long: Probable polyketide synthase 38 (3133 aa).

Residues 9 to 440 (DDDVAVIGIG…GSNVCLILSE (432 aa)) enclose the Ketosynthase family 3 (KS3) domain. Residues Cys181, His320, and His363 each act as for beta-ketoacyl synthase activity in the active site. The acyl/malonyl transferase stretch occupies residues 647–680 (GVSADIIIGHSLGEISSAYCSGMIDFQTLCYLTY). The For acyl/malonyl transferase activity role is filled by Ser657. An N-terminal hotdog fold region spans residues 945 to 1067 (GPSIHSLGNN…GNFSLSKHNI (123 aa)). The 304-residue stretch at 945–1248 (GPSIHSLGNN…CTIVASNPDS (304 aa)) folds into the PKS/mFAS DH domain. The active-site Proton acceptor; for dehydratase activity is the His979. Positions 1083 to 1248 (NFTCISKQDL…CTIVASNPDS (166 aa)) are C-terminal hotdog fold. Asp1155 (proton donor; for dehydratase activity) is an active-site residue. Residues 1370-1408 (NNNNNNNNNNNNNNNNNNNNNNNNNNNNNNNNNDNDNDN) form a disordered region. The 78-residue stretch at 2562 to 2639 (NNNEIIRSTI…QSIEIIKSAH (78 aa)) folds into the Carrier domain. Ser2599 is subject to O-(pantetheine 4'-phosphoryl)serine. Positions 2649-2711 (NNNNSNHHDN…NNNNNNNNNN (63 aa)) form a coiled coil. Disordered regions lie at residues 2691–2715 (LNNN…NNNN) and 2794–2817 (GNIS…NNNQ). Composition is skewed to low complexity over residues 2692 to 2715 (NNNN…NNNN) and 2795 to 2817 (NISN…NNNQ).

Requires pantetheine 4'-phosphate as cofactor.

Functionally, probable polyketide synthase. This is Probable polyketide synthase 38 (pks38) from Dictyostelium discoideum (Social amoeba).